A 442-amino-acid polypeptide reads, in one-letter code: Trigger factor (442 aa).

Residues 162–247 form the PPIase FKBP-type domain; it reads GDRMTFDFEG…VKAIESRELP (86 aa).

Belongs to the FKBP-type PPIase family. Tig subfamily.

The protein localises to the cytoplasm. It carries out the reaction [protein]-peptidylproline (omega=180) = [protein]-peptidylproline (omega=0). In terms of biological role, involved in protein export. Acts as a chaperone by maintaining the newly synthesized protein in an open conformation. Functions as a peptidyl-prolyl cis-trans isomerase. The polypeptide is Trigger factor (Magnetococcus marinus (strain ATCC BAA-1437 / JCM 17883 / MC-1)).